Here is a 216-residue protein sequence, read N- to C-terminus: Probable Golgi SNAP receptor complex member 2 (216 aa).

Residues 1 to 194 lie on the Cytoplasmic side of the membrane; it reads MESLYHQTNN…IERRLVEDRR (194 aa). Residues 62-103 are a coiled coil; that stretch reads QRQSSKLRVDQLKYDLRHLQTSLQTARERRQRRMQEISEREQ. Residues 195–215 traverse the membrane as a helical; Anchor for type IV membrane protein segment; it reads IFIGGVVVTLLIIALIIYFLV. A topological domain (vesicular) is located at residue L216.

The protein belongs to the GOSR2 family. As to quaternary structure, part of a unique SNARE complex.

It localises to the golgi apparatus. Its subcellular location is the cis-Golgi network membrane. The protein localises to the golgi apparatus membrane. It is found in the endoplasmic reticulum membrane. In terms of biological role, involved in transport of proteins from the cis/medial-Golgi to the trans-Golgi network. The protein is Probable Golgi SNAP receptor complex member 2 of Drosophila melanogaster (Fruit fly).